The primary structure comprises 264 residues: Tritrans,polycis-undecaprenyl-diphosphate synthase (geranylgeranyl-diphosphate specific) (264 aa).

The active site involves Asp43. Mg(2+) is bound at residue Asp43. Substrate contacts are provided by residues 44 to 47, Trp48, His60, and 88 to 90; these read GNRR and STE. Residue Asn91 is the Proton acceptor of the active site. Residues Phe92, Arg94, Arg213, and 219–221 contribute to the substrate site; that span reads RIS. Glu232 contributes to the Mg(2+) binding site.

Belongs to the UPP synthase family. Homodimer. Requires Mg(2+) as cofactor.

It carries out the reaction geranylgeranyl diphosphate + 7 isopentenyl diphosphate = tri-trans,hepta-cis-undecaprenyl diphosphate + 7 diphosphate. Functionally, catalyzes the sequential condensation of isopentenyl diphosphate (IPP) with geranylgeranyl diphosphate (GGPP) to yield (2Z,6Z,10Z,14Z,18Z,22Z,26Z,30E,34E,38E)-undecaprenyl diphosphate (tritrans,heptacis-UPP). It is probably the precursor of glycosyl carrier lipids. The polypeptide is Tritrans,polycis-undecaprenyl-diphosphate synthase (geranylgeranyl-diphosphate specific) (Pyrococcus horikoshii (strain ATCC 700860 / DSM 12428 / JCM 9974 / NBRC 100139 / OT-3)).